The following is a 293-amino-acid chain: Bifunctional protein FolD (293 aa).

NADP(+) contacts are provided by residues 166-168 (GRS), serine 191, and isoleucine 232.

It belongs to the tetrahydrofolate dehydrogenase/cyclohydrolase family. As to quaternary structure, homodimer.

The catalysed reaction is (6R)-5,10-methylene-5,6,7,8-tetrahydrofolate + NADP(+) = (6R)-5,10-methenyltetrahydrofolate + NADPH. It catalyses the reaction (6R)-5,10-methenyltetrahydrofolate + H2O = (6R)-10-formyltetrahydrofolate + H(+). Its pathway is one-carbon metabolism; tetrahydrofolate interconversion. Its function is as follows. Catalyzes the oxidation of 5,10-methylenetetrahydrofolate to 5,10-methenyltetrahydrofolate and then the hydrolysis of 5,10-methenyltetrahydrofolate to 10-formyltetrahydrofolate. The chain is Bifunctional protein FolD from Synechococcus sp. (strain JA-2-3B'a(2-13)) (Cyanobacteria bacterium Yellowstone B-Prime).